A 278-amino-acid chain; its full sequence is Urease accessory protein UreD 1 (278 aa).

Belongs to the UreD family. UreD, UreF and UreG form a complex that acts as a GTP-hydrolysis-dependent molecular chaperone, activating the urease apoprotein by helping to assemble the nickel containing metallocenter of UreC. The UreE protein probably delivers the nickel.

The protein resides in the cytoplasm. Its function is as follows. Required for maturation of urease via the functional incorporation of the urease nickel metallocenter. The chain is Urease accessory protein UreD 1 from Bradyrhizobium sp. (strain ORS 278).